The following is a 1017-amino-acid chain: Fanconi-associated nuclease 1 (1017 aa).

A compositionally biased stretch (basic and acidic residues) spans 1–10; the sequence is MMSEGKPPDK. The interval 1–23 is disordered; sequence MMSEGKPPDKKRPRRSLSISKNK. Over residues 11 to 23 the composition is skewed to basic residues; the sequence is KRPRRSLSISKNK. The D-box signature appears at 14 to 22; that stretch reads RRSLSISKN. A UBZ4-type zinc finger spans residues 41–69; sequence KLACPVCSKMVPRYDLNRHLDEMCANNDF. Zn(2+) is bound by residues cysteine 44, cysteine 47, histidine 59, and cysteine 64. Disordered regions lie at residues 95–121 and 170–189; these read EDVT…KREV and IDKD…STVV. The segment covering 179-189 has biased composition (polar residues); sequence SSPQSSKSTVV. A Phosphoserine modification is found at serine 180. The KEN box signature appears at 212-214; the sequence is KEN. The stretch at 671–696 forms a coiled coil; it reads SRFVEILQRLHMYEEAVRELESLLSQ. The Mn(2+) site is built by glutamate 834, aspartate 960, glutamate 975, and valine 976. The VRR-NUC domain maps to 895 to 1007; it reads EESLRAWVAA…GAEVEVCHVV (113 aa).

This sequence belongs to the FAN1 family. Interacts with FANCD2 (when monoubiquitinated). Interacts with FANCI, MLH1, MLH3 and PMS2. The cofactor is Mn(2+). Mg(2+) is required as a cofactor. Ubiquitinated and degraded during mitotic exit by the APC/C-Cdh1 complex.

Its subcellular location is the nucleus. The enzyme catalyses Hydrolytically removes 5'-nucleotides successively from the 3'-hydroxy termini of 3'-hydroxy-terminated oligonucleotides.. In terms of biological role, nuclease required for the repair of DNA interstrand cross-links (ICL) recruited at sites of DNA damage by monoubiquitinated FANCD2. Specifically involved in repair of ICL-induced DNA breaks by being required for efficient homologous recombination, probably in the resolution of homologous recombination intermediates. Not involved in DNA double-strand breaks resection. Acts as a 5'-3' exonuclease that anchors at a cut end of DNA and cleaves DNA successively at every third nucleotide, allowing to excise an ICL from one strand through flanking incisions. Probably keeps excising with 3'-flap annealing until it reaches and unhooks the ICL. Acts at sites that have a 5'-terminal phosphate anchor at a nick or a 1- or 2-nucleotide flap and is augmented by a 3' flap. Also has endonuclease activity toward 5'-flaps. This is Fanconi-associated nuclease 1 from Homo sapiens (Human).